The following is a 1216-amino-acid chain: Apical endosomal glycoprotein (1216 aa).

Positions 1-22 (MPLSSHLLPALVLFLAGSSGWA) are cleaved as a signal peptide. Residues 23–1151 (WVPNHCRSPG…SPGNTAAPGS (1129 aa)) are Extracellular-facing. In terms of domain architecture, LDL-receptor class A 1; truncated spans 26–53 (NHCRSPGQAVCNFVCDCRDCSDEAQCGY). In terms of domain architecture, MAM 1 spans 64-222 (FACDFEQDPC…DDLEFWDCGL (159 aa)). Asn-203 carries an N-linked (GlcNAc...) asparagine glycan. In terms of domain architecture, LDL-receptor class A 2 spans 228–266 (NCPPGHHHCQNKVCVEPQQLCDGEDNCGDLSDENPLTCG). 3 cysteine pairs are disulfide-bonded: Cys-229/Cys-241, Cys-236/Cys-254, and Cys-248/Cys-265. An MAM 2 domain is found at 269 to 425 (IATDFETGLG…DLILSDHCRP (157 aa)). Positions 280 to 307 (WNRSEGWSRNHRAGGPERPSWPRRDHSR) are disordered. 2 N-linked (GlcNAc...) asparagine glycosylation sites follow: Asn-281 and Asn-339. The interval 429–455 (VSTLQPLPPGPRAPAPQPLPPSSRLQD) is disordered. Over residues 434-449 (PLPPGPRAPAPQPLPP) the composition is skewed to pro residues. The region spanning 456–491 (SCKQGHLACGDLCVPPEQLCDFEEQCAGGEDEQACG) is the LDL-receptor class A 3 domain. 3 cysteine pairs are disulfide-bonded: Cys-457-Cys-468, Cys-464-Cys-481, and Cys-475-Cys-490. 4 consecutive MAM domains span residues 491 to 644 (GTTD…DCSP), 654 to 809 (VSCN…PCWA), 811 to 969 (NYCS…PCPQ), and 971 to 1138 (GSCD…HCQQ). 2 N-linked (GlcNAc...) asparagine glycosylation sites follow: Asn-583 and Asn-636. Asn-835 carries N-linked (GlcNAc...) asparagine glycosylation. Residues 1152 to 1172 (VPAVVGSALLLLMLLVLLGLG) traverse the membrane as a helical segment. The Cytoplasmic portion of the chain corresponds to 1173–1216 (GRRWLQKKGSCPFQSNTEATAPGFDNILFNADGVTLPASVTSDP).

It is found in the membrane. Probably involved in the sorting and selective transport of receptors and ligands across polarized epithelia. In Homo sapiens (Human), this protein is Apical endosomal glycoprotein.